The primary structure comprises 538 residues: Syncytin-2 (538 aa).

A signal peptide spans Met-1 to Ala-15. The Extracellular segment spans residues Ala-16 to Lys-478. Residues Cys-43–Cys-46 carry the CXXC motif. Disulfide bonds link Cys-43–Cys-46, Cys-43–Cys-439, and Cys-431–Cys-438. N-linked (GlcNAc...) asparagine glycans are attached at residues Asn-133, Asn-146, Asn-177, Asn-220, Asn-241, Asn-247, Asn-312, and Asn-332. Residues Phe-354–Ile-374 form a fusion peptide region. The CKS-17 motif lies at Leu-414 to Ile-430. The CX6CC signature appears at Cys-431 to Cys-439. The N-linked (GlcNAc...) asparagine glycan is linked to Asn-443. The helical transmembrane segment at Trp-479 to Phe-499 threads the bilayer. Topologically, residues Gly-500 to Phe-538 are cytoplasmic.

This sequence belongs to the gamma type-C retroviral envelope protein family. HERV class-I FRD env subfamily. In terms of assembly, the surface and transmembrane proteins form a heterodimer. They are attached by non-covalent interactions or by a labile interchain disulfide bond. Interacts with MFSD2A. Post-translationally, specific enzymatic cleavages in vivo yield the mature SU and TM proteins. In terms of processing, the CXXC motif is highly conserved across a broad range of retroviral envelope proteins. It is thought to participate in the formation of a labile disulfide bond possibly with the CX6CC motif present in the transmembrane protein. Isomerization of the intersubunit disulfide bond to an SU intrachain disulfide bond is thought to occur upon receptor recognition in order to allow membrane fusion. As to expression, expressed at higher level in placenta. Expressed at lower level in adrenal, bone marrow, brain, breast, colon, kidney, lung, ovary, peripheral blood lymphocytes, prostate, skin, spleen, testis, thymus, thyroid, trachea.

Its subcellular location is the virion. It localises to the cell membrane. This endogenous retroviral envelope protein has retained its original fusogenic properties and participates in trophoblast fusion and the formation of a syncytium during placenta morphogenesis. The interaction with MFSD2A is apparently important for this process. Functionally, endogenous envelope proteins may have kept, lost or modified their original function during evolution but this one can still make pseudotypes with MLV, HIV-1 or SIV-1 virions and confer infectivity. Retroviral envelope proteins mediate receptor recognition and membrane fusion during early infection. The surface protein mediates receptor recognition, while the transmembrane protein anchors the envelope heterodimer to the viral membrane through one transmembrane domain. The other hydrophobic domain, called fusion peptide, mediates fusion of the viral membrane with the target cell membrane. This Homo sapiens (Human) protein is Syncytin-2 (ERVFRD-1).